The sequence spans 323 residues: o-succinylbenzoate synthase (323 aa).

Lys134 acts as the Proton donor in catalysis. Asp162, Glu191, and Asp214 together coordinate Mg(2+). Residue Lys236 is the Proton acceptor of the active site.

This sequence belongs to the mandelate racemase/muconate lactonizing enzyme family. MenC type 1 subfamily. A divalent metal cation is required as a cofactor.

It carries out the reaction (1R,6R)-6-hydroxy-2-succinyl-cyclohexa-2,4-diene-1-carboxylate = 2-succinylbenzoate + H2O. It functions in the pathway quinol/quinone metabolism; 1,4-dihydroxy-2-naphthoate biosynthesis; 1,4-dihydroxy-2-naphthoate from chorismate: step 4/7. Its pathway is quinol/quinone metabolism; menaquinone biosynthesis. Converts 2-succinyl-6-hydroxy-2,4-cyclohexadiene-1-carboxylate (SHCHC) to 2-succinylbenzoate (OSB). This is o-succinylbenzoate synthase from Yersinia pseudotuberculosis serotype IB (strain PB1/+).